Consider the following 662-residue polypeptide: DCC-interacting protein 13-beta (662 aa).

The 266-residue stretch at 3–268 folds into the BAR domain; that stretch reads AVDKLLLEEA…ESVYTPDIDV (266 aa). Residues 277–375 form the PH domain; the sequence is LIQKTGYLNL…WICAINNISR (99 aa). In terms of domain architecture, PID spans 486–635; sequence SLLQQMFIVR…LMLSVPLTND (150 aa). The segment at 643 to 662 is disordered; it reads DQADDTGGSPSDHRGAESEA. The span at 653–662 shows a compositional bias: basic and acidic residues; the sequence is SDHRGAESEA.

Homodimer. Homotetramer. Binds RAB5A/Rab5 through an N-terminal domain. This interaction is essential for its recruitment to endosomal membranes as well as its role in cell proliferation. Binds subunits of the NuRD/MeCP1 complex. Interacts with FSHR; interaction is independent of follicle stimulating hormone stimulation. Interacts with APPL1; the interaction is decreased by adiponectin in a time-dependent manner. Forms a complex comprising APPL1, RUVBL2, CTNNB1, HDAC1 and HDAC2; interaction reduces interaction between CTNNB1, HDAC1, HDAC2 and RUVBL2 leading to the decrease of deacetylase activity of this complex; affects the recruitment of repressive complexes to the Wnt target genes. Interacts (via BAR domain) with TBC1D1; interaction is dependent of TBC1D1 phosphorylation at 'Ser-235'; interaction diminishes the phosphorylation of TBC1D1 at 'Thr-596', resulting in inhibition of SLC2A4 translocation and glucose uptake. Interacts with ANXA2; targets APPL2 to endosomes and acting in parallel to RAB5A. Interacts with RAB31 (in GTP-bound form); interaction contributes to or enhances recruitment of APPL2 to the phagosomes; interaction enhances Fc-gamma receptor-mediated phagocytosis through PI3K/Akt signaling in macrophages. Interacts with PIK3R1; forms a complex with PIK3R1 and APPL1. Interacts (via BAR domain) with ADIPOR1; hinders the accessibility of APPL1 to ADIPOR1; negatively regulates adiponectin signaling; ADIPOQ dissociates this interaction and facilitates the recruitment of APPL1 to ADIPOR1. Interacts (via BAR domain) with ADIPOR2; ADIPOQ dissociates this interaction.

The protein localises to the early endosome membrane. The protein resides in the nucleus. It is found in the cell membrane. It localises to the endosome membrane. Its subcellular location is the cytoplasm. The protein localises to the cytoplasmic vesicle. The protein resides in the phagosome. It is found in the cell projection. It localises to the ruffle. Its subcellular location is the ruffle membrane. The protein localises to the phagosome membrane. Its function is as follows. Multifunctional adapter protein that binds to various membrane receptors, nuclear factors and signaling proteins to regulate many processes, such as cell proliferation, immune response, endosomal trafficking and cell metabolism. Regulates signaling pathway leading to cell proliferation through interaction with RAB5A and subunits of the NuRD/MeCP1 complex. Plays a role in immune response by modulating phagocytosis, inflammatory and innate immune responses. In macrophages, enhances Fc-gamma receptor-mediated phagocytosis through interaction with RAB31 leading to activation of PI3K/Akt signaling. In response to LPS, modulates inflammatory responses by playing a key role on the regulation of TLR4 signaling and in the nuclear translocation of RELA/NF-kappa-B p65 and the secretion of pro- and anti-inflammatory cytokines. Also functions as a negative regulator of innate immune response via inhibition of AKT1 signaling pathway by forming a complex with APPL1 and PIK3R1. Plays a role in endosomal trafficking of TGFBR1 from the endosomes to the nucleus. Plays a role in cell metabolism by regulating adiponecting ans insulin signaling pathways and adaptative thermogenesis. In muscle, negatively regulates adiponectin-simulated glucose uptake and fatty acid oyidation by inhibiting adiponectin signaling pathway through APPL1 sequestration thereby antagonizing APPL1 action. In muscles, negatively regulates insulin-induced plasma membrane recruitment of GLUT4 and glucose uptake through interaction with TBC1D1. Plays a role in cold and diet-induced adaptive thermogenesis by activating ventromedial hypothalamus (VMH) neurons throught AMPK inhibition which enhances sympathetic outflow to subcutaneous white adipose tissue (sWAT), sWAT beiging and cold tolerance. Also plays a role in other signaling pathways namely Wnt/beta-catenin, HGF and glucocorticoid receptor signaling. Positive regulator of beta-catenin/TCF-dependent transcription through direct interaction with RUVBL2/reptin resulting in the relief of RUVBL2-mediated repression of beta-catenin/TCF target genes by modulating the interactions within the beta-catenin-reptin-HDAC complex. May affect adult neurogenesis in hippocampus and olfactory system via regulating the sensitivity of glucocorticoid receptor. Required for fibroblast migration through HGF cell signaling. The sequence is that of DCC-interacting protein 13-beta from Rattus norvegicus (Rat).